We begin with the raw amino-acid sequence, 188 residues long: Deoxyuridine 5'-triphosphate nucleotidohydrolase (188 aa).

The interval 1 to 34 (MGEMTSGVDGHGSTKRTTSEAQKMDFNTDRGSAI) is disordered.

It belongs to the dUTPase family. The cofactor is Mg(2+).

The enzyme catalyses dUTP + H2O = dUMP + diphosphate + H(+). Functionally, this enzyme is involved in nucleotide metabolism: it produces dUMP, the immediate precursor of thymidine nucleotides and it decreases the intracellular concentration of dUTP so that uracil cannot be incorporated into DNA. The protein is Deoxyuridine 5'-triphosphate nucleotidohydrolase (49) of Ictaluridae (bullhead catfishes).